Here is a 355-residue protein sequence, read N- to C-terminus: Tryptophan--tRNA ligase (355 aa).

ATP-binding positions include 13-15 (QPT) and 21-22 (GN). The short motif at 14–22 (PTGNLHLGN) is the 'HIGH' region element. An L-tryptophan-binding site is contributed by aspartate 137. ATP is bound by residues 149–151 (GED), isoleucine 208, and 217–221 (KMSKS). A 'KMSKS' region motif is present at residues 217–221 (KMSKS).

The protein belongs to the class-I aminoacyl-tRNA synthetase family. Homodimer.

Its subcellular location is the cytoplasm. The catalysed reaction is tRNA(Trp) + L-tryptophan + ATP = L-tryptophyl-tRNA(Trp) + AMP + diphosphate + H(+). Its function is as follows. Catalyzes the attachment of tryptophan to tRNA(Trp). This is Tryptophan--tRNA ligase from Mesorhizobium japonicum (strain LMG 29417 / CECT 9101 / MAFF 303099) (Mesorhizobium loti (strain MAFF 303099)).